A 153-amino-acid polypeptide reads, in one-letter code: Nascent polypeptide-associated complex subunit beta (153 aa).

Disordered stretches follow at residues 1-40 and 126-153; these read MSDVQERLKKLGLGARTGTGKGTPRRKVKRAPARSGADDK and LQKEKGEDDDEIPDLVEGENFEGEPKVE. The segment covering 23–32 has biased composition (basic residues); that stretch reads TPRRKVKRAP. In terms of domain architecture, NAC-A/B spans 36–101; the sequence is GADDKKLQLA…GEDKELTELV (66 aa). Acidic residues predominate over residues 132 to 147; it reads EDDDEIPDLVEGENFE.

Belongs to the NAC-beta family. Part of the nascent polypeptide-associated complex (NAC), consisting of EGD2 and EGD1. NAC associates with ribosomes via EGD1.

The protein localises to the cytoplasm. Its subcellular location is the nucleus. In terms of biological role, component of the nascent polypeptide-associated complex (NAC), a dynamic component of the ribosomal exit tunnel, protecting the emerging polypeptides from interaction with other cytoplasmic proteins to ensure appropriate nascent protein targeting. The NAC complex also promotes mitochondrial protein import by enhancing productive ribosome interactions with the outer mitochondrial membrane and blocks the inappropriate interaction of ribosomes translating non-secretory nascent polypeptides with translocation sites in the membrane of the endoplasmic reticulum. EGD1 may act as a transcription factor that exert a negative effect on the expression of several genes that are transcribed by RNA polymerase II. In Gibberella zeae (strain ATCC MYA-4620 / CBS 123657 / FGSC 9075 / NRRL 31084 / PH-1) (Wheat head blight fungus), this protein is Nascent polypeptide-associated complex subunit beta (EGD1).